Here is a 419-residue protein sequence, read N- to C-terminus: Tyrosine--tRNA ligase (419 aa).

An L-tyrosine-binding site is contributed by tyrosine 34. Positions 39-48 (PTADSLHIGH) match the 'HIGH' region motif. 3 residues coordinate L-tyrosine: tyrosine 169, glutamine 173, and aspartate 176. The 'KMSKS' region signature appears at 230–234 (KFGKT). Lysine 233 contacts ATP. Residues 352–419 (VPLVELLVSA…KKKYYLIRYA (68 aa)) form the S4 RNA-binding domain.

It belongs to the class-I aminoacyl-tRNA synthetase family. TyrS type 1 subfamily. Homodimer.

Its subcellular location is the cytoplasm. It carries out the reaction tRNA(Tyr) + L-tyrosine + ATP = L-tyrosyl-tRNA(Tyr) + AMP + diphosphate + H(+). Catalyzes the attachment of tyrosine to tRNA(Tyr) in a two-step reaction: tyrosine is first activated by ATP to form Tyr-AMP and then transferred to the acceptor end of tRNA(Tyr). This Geobacillus stearothermophilus (Bacillus stearothermophilus) protein is Tyrosine--tRNA ligase (tyrS).